The sequence spans 895 residues: Pentatricopeptide repeat-containing protein At1g74600, chloroplastic (895 aa).

A chloroplast-targeting transit peptide spans 1 to 71 (MNCLANESLN…CNLRTTKILQ (71 aa)). PPR repeat units follow at residues 83–113 (DVFLTKSLLSWYSNSGSMADAAKLFDTIPQP), 114–148 (DVVSCNIMISGYKQHRLFEESLRFFSKMHFLGFEA), 149–183 (NEISYGSVISACSALQAPLFSELVCCHTIKMGYFF), 184–214 (YEVVESALIDVFSKNLRFEDAYKVFRDSLSA), 215–249 (NVYCWNTIIAGALRNQNYGAVFDLFHEMCVGFQKP), 250–280 (DSYTYSSVLAACASLEKLRFGKVVQARVIKC), 284–314 (DVFVCTAIVDLYAKCGHMAEAMEVFSRIPNP), 315–349 (SVVSWTVMLSGYTKSNDAFSALEIFKEMRHSGVEI), 350–384 (NNCTVTSVISACGRPSMVCEASQVHAWVFKSGFYL), 385–415 (DSSVAAALISMYSKSGDIDLSEQVFEDLDDI), 417–451 (RQNIVNVMITSFSQSKKPGKAIRLFTRMLQEGLRT), 452–483 (DEFSVCSLLSVLDCLNLGKQVHGYTLKSGLVL), 484–514 (DLTVGSSLFTLYSKCGSLEESYKLFQGIPFK), 515–549 (DNACWASMISGFNEYGYLREAIGLFSEMLDDGTSP), 550–584 (DESTLAAVLTVCSSHPSLPRGKEIHGYTLRAGIDK), 585–615 (GMDLGSALVNMYSKCGSLKLARQVYDRLPEL), 616–650 (DPVSCSSLISGYSQHGLIQDGFLLFRDMVMSGFTM), 651–685 (DSFAISSILKAAALSDESSLGAQVHAYITKIGLCT), 686–716 (EPSVGSSLLTMYSKFGSIDDCCKAFSQINGP), 717–751 (DLIAWTALIASYAQHGKANEALQVYNLMKEKGFKP), 752–787 (DKVTFVGVLSACSHGGLVEESYFHLNSMVKDYGIEP), and 788–818 (ENRHYVCMVDALGRSGRLREAESFINNMHIK). Residues 824 to 895 (WGTLLAACKI…VQKEPGWSSV (72 aa)) form a type E motif; degenerate region.

It belongs to the PPR family. PCMP-E subfamily.

The protein localises to the plastid. The protein resides in the chloroplast. In Arabidopsis thaliana (Mouse-ear cress), this protein is Pentatricopeptide repeat-containing protein At1g74600, chloroplastic (PCMP-E69).